The primary structure comprises 1112 residues: Constitutive coactivator of PPAR-gamma-like protein 1 (1112 aa).

Residues 339–403 (PPHYLARPNP…YSLSEPALTL (65 aa)) are interaction with YES1, SRC and FYN. The tract at residues 372 to 525 (QAKPAVPQVP…GKGSHMGTVQ (154 aa)) is disordered. Composition is skewed to polar residues over residues 403–418 (LDTS…SYSN) and 433–445 (SPIN…SPNH). Residues 479–500 (GWEKTGSHAEPLARGDPGDQVK) show a composition bias toward basic and acidic residues. The segment covering 503–512 (GSSTASSGSQ) has biased composition (polar residues). Phosphothreonine is present on T653. The interval 827–1112 (AEQAAKVEKM…LEAAVLNKEE (286 aa)) is RNA binding. Omega-N-methylarginine occurs at positions 871, 882, and 884. Positions 919–943 (AFSGSDSSRTSKSQGGVQPIPSQGG) are disordered. Residues 922–934 (GSDSSRTSKSQGG) are compositionally biased toward polar residues. K930 carries the N6-acetyllysine modification. A Phosphoserine modification is found at S958. Omega-N-methylarginine occurs at positions 980 and 984. Phosphoserine is present on residues S1021 and S1042. Residues 1030–1090 (KSKSGESKSS…PCNTNPHLNA (61 aa)) are disordered. Polar residues predominate over residues 1070–1090 (HSESALNNDSKPCNTNPHLNA).

The protein belongs to the constitutive coactivator of PPAR-gamma family. In terms of assembly, interacts with PURA. Interacts with SRC family protein kinases YES1, SRC and FYN. Upon tyrosine phosphorylation, interacts with PIK3R1. Interacts with IGF2BP1/IMP-1 in an RNA-dependent manner. Arg-980 is dimethylated, probably to asymmetric dimethylarginine. In terms of processing, phosphorylated on tyrosine by src family kinases upon ultraviolet exposure. In the brain, predominantly expressed in the hippocampus, caudate putamen, cerebral cortex and cerebellum. Expression is restricted to neurons (at protein level).

It is found in the cytoplasm. The protein resides in the cell membrane. Its function is as follows. Component of the oxidative stress-induced survival signaling. May regulate the activation of SRC family protein kinases. May act as a scaffolding protein enabling SRC family protein kinases to phosphorylate and activate PI3-kinase. Binds IGF2 RNA and promotes the production of IGF2 protein. This Mus musculus (Mouse) protein is Constitutive coactivator of PPAR-gamma-like protein 1 (FAM120A).